A 231-amino-acid polypeptide reads, in one-letter code: MVELNLDAGNVISGDVHRVGILALGSHLENHGPALPIDTDAKIASYVALEASLRTGAKFLGVIYGATEFPYVKHGIHIERDELLEGDLKPVLRKARKRLNIDAAVIVNGHGGNQLEDCVEDLMDELDMEIIWNNRIVEIEGPHAGSGEVSAGIILGIADLTRLGECRPELYPEIGMIGLREAREANKGIDRAARICEKEGINPDPVLGQRILDDAIESVISDVRELLEMLP.

Fe cation contacts are provided by E29, H31, D40, and H110.

The protein belongs to the creatininase superfamily. FAPy deformylase family. As to quaternary structure, homodimer. Fe(2+) is required as a cofactor. Requires Zn(2+) as cofactor.

It catalyses the reaction 2-amino-5-formylamino-6-(5-phospho-D-ribosylamino)pyrimidin-4(3H)-one + H2O = 2,5-diamino-6-(1-D-ribosylamino)pyrimidin-4(3H)-one 5'-phosphate + formate + H(+). The protein operates within cofactor biosynthesis; coenzyme F420 biosynthesis. It functions in the pathway cofactor biosynthesis; riboflavin biosynthesis. Catalyzes the hydrolysis of the formamide of 2-amino-5-formylamino-6-ribosylamino-4(3H)-pyrimidinone 5'-monophosphate (FAPy) to form 2,5-diamino-6-ribosylamino-4(3H)-pyrimidinone 5'-phosphate (APy). This is 2-amino-5-formylamino-6-ribosylaminopyrimidin-4(3H)-one 5'-monophosphate deformylase from Methanothermobacter marburgensis (strain ATCC BAA-927 / DSM 2133 / JCM 14651 / NBRC 100331 / OCM 82 / Marburg) (Methanobacterium thermoautotrophicum).